A 150-amino-acid chain; its full sequence is MNATKFLVLLVIGVLCAIVTARQVKDLSTETKLGASLPKTTTKGIGAQLSATGSTFSSSSVVSYANGFNNPKGPGANAFESGSTFTSGQVTAKGRKARVSSASASTATGEAAAAVTRKAAAARAKGKVASASRVKGSSEKKKKDRKGKKD.

Residues 1 to 21 (MNATKFLVLLVIGVLCAIVTA) form the signal peptide. Residues 119–135 (AAAARAKGKVASASRVK) are compositionally biased toward low complexity. A disordered region spans residues 119–150 (AAAARAKGKVASASRVKGSSEKKKKDRKGKKD).

Belongs to the UPF0540 family.

The polypeptide is UPF0540 protein At1g62080 (Arabidopsis thaliana (Mouse-ear cress)).